The chain runs to 359 residues: RuBisCO accumulation factor 1 (359 aa).

The interval 12-195 (LSPEETDALF…RQKIEQLLSD (184 aa)) is N-terminal alpha-helix. Positions 219–345 (PLLIPVAGSL…VLLVMRPKKI (127 aa)) are C-terminal beta-sheet.

The protein belongs to the RAF family. Homodimer. Forms an RbcL(8)-Raf1(8) complex. Forms complexes of many stoichiometries with RbcL with and without RbcS. RbcX and Raf1 can bind simultaneously to RbcL.

Its subcellular location is the cytoplasm. A major RuBisCO chaperone. Acts after GroEL-GroES chaperonin to fold and/or assemble the large subunit of RuBisCO (ccbL, rbcL). Cooperates with RbcX in RbcL folding, plays the major role in assembly of dimers into RbcL(8)-Raf1(8) intermediate complexes. RbcS replaces Raf1, leading to holoenzyme formation. In terms of biological role, raf1 and RbcX are probably functionally redundant; it has been suggested they may cooperate. This chain is RuBisCO accumulation factor 1, found in Picosynechococcus sp. (strain ATCC 27264 / PCC 7002 / PR-6) (Agmenellum quadruplicatum).